The sequence spans 190 residues: MSGDNQLGRLVILAGPSAVGKSTVVDRLRNDVPNLYFSVSMTTRAPRPGEVDGRDYFYVTAQEFQDKIDCGEMLEWADIHGGLQRSGTPAGPVNEARQNGRPVLVEVDLAGARNIASLIPDAETIFLAPPSWEVLVERLTGRGTESEDVIARRLETAREELAAQSEFKHVIINDDVDTAVKAIEDVLLGA.

The Guanylate kinase-like domain maps to 8–188 (GRLVILAGPS…AVKAIEDVLL (181 aa)). Residue 15–22 (GPSAVGKS) coordinates ATP.

Belongs to the guanylate kinase family.

It is found in the cytoplasm. It carries out the reaction GMP + ATP = GDP + ADP. Functionally, essential for recycling GMP and indirectly, cGMP. The chain is Guanylate kinase from Corynebacterium glutamicum (strain ATCC 13032 / DSM 20300 / JCM 1318 / BCRC 11384 / CCUG 27702 / LMG 3730 / NBRC 12168 / NCIMB 10025 / NRRL B-2784 / 534).